A 331-amino-acid polypeptide reads, in one-letter code: ADP,ATP carrier protein 2, mitochondrial (331 aa).

3 Solcar repeats span residues 29-122, 134-226, and 238-320; these read KNFA…FKRM, KWFG…LKPV, and ASFA…LQIL. 5 helical membrane passes run 31-58, 99-123, 132-152, 202-223, and 237-257; these read FAIDFLMGGVSAAVSKTAAAPIERVKLL, TANVIRYFPTQALNFAFKDYFKRMF, YWKWFGGNLASGGAAGASSLF, FNISCVGIIVYRGLYFGLYDSL, and FASFALGWLITNGAGLASYPI. ADP is bound by residues Arg104 and Lys116. Arg261 contributes to the ADP binding site. The interval 261–266 is important for transport activity; sequence RRRMMM. Positions 261–266 match the Nucleotide carrier signature motif motif; that stretch reads RRRMMM. The chain crosses the membrane as a helical span at residues 297–317; that stretch reads AGANILRAIAGAGVLSGYDQL.

It belongs to the mitochondrial carrier (TC 2.A.29) family. Monomer.

The protein resides in the mitochondrion inner membrane. The enzyme catalyses ADP(in) + ATP(out) = ADP(out) + ATP(in). The matrix-open state (m-state) is inhibited by the membrane-permeable bongkrekic acid (BKA). The cytoplasmic-open state (c-state) is inhibited by the membrane-impermeable toxic inhibitor carboxyatractyloside (CATR). Its function is as follows. ADP:ATP antiporter that mediates import of ADP into the mitochondrial matrix for ATP synthesis, and export of ATP out to fuel the cell. Cycles between the cytoplasmic-open state (c-state) and the matrix-open state (m-state): operates by the alternating access mechanism with a single substrate-binding site intermittently exposed to either the cytosolic (c-state) or matrix (m-state) side of the inner mitochondrial membrane. In Triticum aestivum (Wheat), this protein is ADP,ATP carrier protein 2, mitochondrial (ANT-G2).